The following is a 493-amino-acid chain: Betaine aldehyde dehydrogenase (493 aa).

Ser32, Ile33, and Asp99 together coordinate K(+). Gly156–Trp158 serves as a coordination point for NAD(+). The active-site Charge relay system is Lys168. NAD(+)-binding positions include Lys182–Glu185 and Ser235–Thr238. Leu250 is a binding site for K(+). Glu256 serves as the catalytic Proton acceptor. The NAD(+) site is built by Gly258, Cys290, and Glu390. Residue Cys290 is the Nucleophile of the active site. Cys290 carries the cysteine sulfenic acid (-SOH) modification. Residues Lys460 and Gly463 each contribute to the K(+) site. The active-site Charge relay system is Glu467.

It belongs to the aldehyde dehydrogenase family. As to quaternary structure, dimer of dimers. K(+) serves as cofactor.

It carries out the reaction betaine aldehyde + NAD(+) + H2O = glycine betaine + NADH + 2 H(+). It participates in amine and polyamine biosynthesis; betaine biosynthesis via choline pathway; betaine from betaine aldehyde: step 1/1. Functionally, involved in the biosynthesis of the osmoprotectant glycine betaine. Catalyzes the irreversible oxidation of betaine aldehyde to the corresponding acid. The polypeptide is Betaine aldehyde dehydrogenase (Agrobacterium fabrum (strain C58 / ATCC 33970) (Agrobacterium tumefaciens (strain C58))).